The following is a 349-amino-acid chain: Septin-2 (349 aa).

Residues 33–305 enclose the Septin-type G domain; sequence KGFEFTLMVV…ENFRSERLKR (273 aa). The segment at 43 to 50 is G1 motif; that stretch reads GESGLGKS. GTP-binding positions include 43–50, T77, G103, 182–190, G240, and R255; these read GESGLGKS and KADTLTLKE. The tract at residues 100-103 is G3 motif; it reads DTPG. Positions 181–184 are G4 motif; it reads AKAD. The segment at 259–269 is important for dimerization; the sequence is WGVVEVENPEH.

The protein belongs to the TRAFAC class TrmE-Era-EngA-EngB-Septin-like GTPase superfamily. Septin GTPase family. Septins polymerize into heterooligomeric protein complexes that form filaments, and associate with cellular membranes, actin filaments and microtubules. GTPase activity is required for filament formation. Can form heterooligomers with other family members and form filaments.

Its subcellular location is the cytoplasm. The protein resides in the cytoskeleton. It is found in the spindle. The protein localises to the cleavage furrow. It localises to the midbody. Its subcellular location is the cell cortex. The protein resides in the cell projection. It is found in the cilium membrane. Its function is as follows. Filament-forming cytoskeletal GTPase. Required for normal organization of the actin cytoskeleton. Plays a role in the biogenesis of polarized columnar-shaped epithelium by maintaining polyglutamylated microtubules, thus facilitating efficient vesicle transport, and by impeding MAP4 binding to tubulin. Required for the progression through mitosis. Forms a scaffold at the midplane of the mitotic splindle required to maintain CENPE localization at kinetochores and consequently chromosome congression. During anaphase, may be required for chromosome segregation and spindle elongation. Plays a role in ciliogenesis and collective cell movements. In cilia, required for the integrity of the diffusion barrier at the base of the primary cilium that prevents diffusion of transmembrane proteins between the cilia and plasma membranes. This Gallus gallus (Chicken) protein is Septin-2.